Reading from the N-terminus, the 147-residue chain is Auxin-responsive protein SAUR41 (147 aa).

It belongs to the ARG7 family. Specifically expressed in the quiescent center and cortex or endodermis initials of root stem niches. Expressed in vascular tissues from hypocotyls, petioles and cotyledons.

Its subcellular location is the cytoplasm. Its function is as follows. Plays a role in the regulation of cell expansion, root meristem patterning and auxin transport. This chain is Auxin-responsive protein SAUR41, found in Arabidopsis thaliana (Mouse-ear cress).